A 230-amino-acid polypeptide reads, in one-letter code: Ribosome maturation factor RimM (230 aa).

Residues 149–230 enclose the PRC barrel domain; the sequence is ADEFYWVDLI…RVVVDWEADY (82 aa).

It belongs to the RimM family. Binds ribosomal protein uS19.

It localises to the cytoplasm. In terms of biological role, an accessory protein needed during the final step in the assembly of 30S ribosomal subunit, possibly for assembly of the head region. Essential for efficient processing of 16S rRNA. May be needed both before and after RbfA during the maturation of 16S rRNA. It has affinity for free ribosomal 30S subunits but not for 70S ribosomes. The sequence is that of Ribosome maturation factor RimM from Burkholderia mallei (strain NCTC 10229).